Here is a 502-residue protein sequence, read N- to C-terminus: Cytochrome P450 monooxygenase verC (502 aa).

The helical transmembrane segment at 9–29 (IAALPMVSLLGAALIVVSVLG) threads the bilayer. 4 N-linked (GlcNAc...) asparagine glycosylation sites follow: Asn124, Asn190, Asn271, and Asn342. Position 444 (Cys444) interacts with heme.

This sequence belongs to the cytochrome P450 family. The cofactor is heme.

Its subcellular location is the membrane. Its pathway is mycotoxin biosynthesis. Functionally, cytochrome P450 monooxygenase; part of the gene cluster that mediates the biosynthesis of 11'-deoxyverticillin A, one of the dimeric epipolythiodioxopiperazines (ETPs) from the verticillin family that act as mycotoxins. 11'-deoxyverticillin A is required for normal conidiation. The nonribosomal peptide synthetase verP is speculated to be responsible for condensation of amino acids to form the carbon skeleton of verticillin, whereas the cluster-specific tailoring enzymes are involved in further modifications leading to the production of 11'-deoxyverticillin A. The sequence is that of Cytochrome P450 monooxygenase verC from Clonostachys rogersoniana.